The chain runs to 745 residues: Cellulose synthase 1 catalytic subunit [UDP-forming] (745 aa).

3 helical membrane passes run 29–49 (YVVG…TLSL), 106–126 (GILG…LFLS), and 153–173 (IFIP…LGAL). Residues 147–240 (EWPTVDIFIP…HILILDCDHI (94 aa)) are catalytic subdomain A. D189 is a catalytic residue. 2 residues coordinate substrate: D236 and D238. Residues 317–377 (KAIEEIGGFA…GQRMRWARGM (61 aa)) are catalytic subdomain B. The active site involves D333. 6 consecutive transmembrane segments (helical) span residues 407–427 (FFFA…LFFS), 430–450 (IIAA…FHSI), 468–488 (VYET…MLFP), 515–535 (NIIF…ALIF), 547–567 (ALNC…ISVG), and 649–669 (AVFT…RFVF). A PilZ domain is found at 572-670 (QLRQSHRIEA…EAAVVRFVFG (99 aa)). Residues 708 to 717 (IAHSRPKKKP) show a composition bias toward basic residues. Residues 708-745 (IAHSRPKKKPIALPVERREPTTSQGGQKQEGKISRAAS) are disordered. Positions 736–745 (QEGKISRAAS) are enriched in basic and acidic residues.

The protein belongs to the glycosyltransferase 2 family. It depends on Mg(2+) as a cofactor.

The protein resides in the cell inner membrane. It carries out the reaction [(1-&gt;4)-beta-D-glucosyl](n) + UDP-alpha-D-glucose = [(1-&gt;4)-beta-D-glucosyl](n+1) + UDP + H(+). The protein operates within glycan metabolism; bacterial cellulose biosynthesis. With respect to regulation, activated by bis-(3'-5') cyclic diguanylic acid (c-di-GMP). Functionally, catalytic subunit of cellulose synthase. It polymerizes uridine 5'-diphosphate glucose to cellulose. The thick cellulosic mats generated by this enzyme probably provide a specialized protective environment to the bacterium. In Komagataeibacter xylinus (Gluconacetobacter xylinus), this protein is Cellulose synthase 1 catalytic subunit [UDP-forming] (bcsAI).